We begin with the raw amino-acid sequence, 118 residues long: Large ribosomal subunit protein bL20 (118 aa).

The protein belongs to the bacterial ribosomal protein bL20 family.

In terms of biological role, binds directly to 23S ribosomal RNA and is necessary for the in vitro assembly process of the 50S ribosomal subunit. It is not involved in the protein synthesizing functions of that subunit. This is Large ribosomal subunit protein bL20 from Thermosipho africanus (strain TCF52B).